A 287-amino-acid chain; its full sequence is Alpha-tubulin N-acetyltransferase 2 (287 aa).

The N-acetyltransferase domain occupies Val2 to Phe193. Acetyl-CoA-binding positions include Phe127 to Lys140 and Ser163 to Lys172.

Belongs to the acetyltransferase ATAT1 family.

It localises to the midbody. The protein resides in the midbody ring. The catalysed reaction is L-lysyl-[alpha-tubulin] + acetyl-CoA = N(6)-acetyl-L-lysyl-[alpha-tubulin] + CoA + H(+). Specifically acetylates 'Lys-40' in alpha-tubulin on the lumenal side of microtubules. Promotes microtubule destabilization and accelerates microtubule dynamics; this activity may be independent of acetylation activity. Acetylates alpha-tubulin with a slow enzymatic rate, due to a catalytic site that is not optimized for acetyl transfer. Enters the microtubule through each end and diffuses quickly throughout the lumen of microtubules. Acetylates only long/old microtubules because of its slow acetylation rate since it does not have time to act on dynamically unstable microtubules before the enzyme is released. Main acetyltransferase responsible for alpha-tubulin 'Lys-40' acetylation in germline cells during the early stages of oogenesis. Required for normal egg chamber separation. This is Alpha-tubulin N-acetyltransferase 2 from Drosophila melanogaster (Fruit fly).